We begin with the raw amino-acid sequence, 540 residues long: Dynein axonemal assembly factor 3 (540 aa).

2 disordered regions span residues 328 to 355 and 485 to 522; these read RASRGHPEEQQRSEASPEPGTPASTPES and SSPAPEGLTQPLQGGTPHWEPCQLPSESPGSLSEVLAQ.

Belongs to the DNAAF3 family.

It localises to the cytoplasm. Its subcellular location is the dynein axonemal particle. In terms of biological role, required for the assembly of axonemal inner and outer dynein arms. Involved in preassembly of dyneins into complexes before their transport into cilia. This is Dynein axonemal assembly factor 3 (DNAAF3) from Macaca fascicularis (Crab-eating macaque).